A 131-amino-acid polypeptide reads, in one-letter code: Profilin-8 (131 aa).

An intrachain disulfide couples Cys-13 to Cys-115. Positions 81–97 (AVIRGKKGAGGITIKKT) match the Involved in PIP2 interaction motif. A Phosphothreonine modification is found at Thr-111.

The protein belongs to the profilin family. Occurs in many kinds of cells as a complex with monomeric actin in a 1:1 ratio. In terms of processing, phosphorylated by MAP kinases.

Its subcellular location is the cytoplasm. The protein resides in the cytoskeleton. Binds to actin and affects the structure of the cytoskeleton. At high concentrations, profilin prevents the polymerization of actin, whereas it enhances it at low concentrations. This Olea europaea (Common olive) protein is Profilin-8.